Here is a 316-residue protein sequence, read N- to C-terminus: Olfactory receptor 2AG1 (316 aa).

Over 1–25 the chain is Extracellular; the sequence is MELWNFTLGSGFILVGILNDSGSPE. 2 N-linked (GlcNAc...) asparagine glycosylation sites follow: Asn-5 and Asn-19. A helical transmembrane segment spans residues 26–49; it reads LLCATITILYLLALISNGLLLLAI. The Cytoplasmic portion of the chain corresponds to 50–57; it reads TMEARLHM. The chain crosses the membrane as a helical span at residues 58 to 79; the sequence is PMYLLLGQLSLMDLLFTSVVTP. Residues 80–100 are Extracellular-facing; it reads KALADFLRRENTISFGGCALQ. A disulfide bridge connects residues Cys-97 and Cys-189. Residues 101 to 120 traverse the membrane as a helical segment; sequence MFLALTMGGAEDLLLAFMAY. At 121–139 the chain is on the cytoplasmic side; that stretch reads DRYVAICHPLTYMTLMSSR. A helical membrane pass occupies residues 140–158; it reads ACWLMVATSWILASLSALI. Residues 159 to 195 lie on the Extracellular side of the membrane; the sequence is YTVYTMHYPFCRAQEIRHLLCEIPHLLKVACADTSRY. Residues 196-219 traverse the membrane as a helical segment; the sequence is ELMVYVMGVTFLIPSLAAILASYT. Topologically, residues 220 to 236 are cytoplasmic; sequence QILLTVLHMPSNEGRKK. Residues 237 to 259 traverse the membrane as a helical segment; that stretch reads ALVTCSSHLTVVGMFYGAATFMY. Topologically, residues 260-272 are extracellular; the sequence is VLPSSFHSTRQDN. Residues 273 to 292 traverse the membrane as a helical segment; sequence IISVFYTIVTPALNPLIYSL. Residues 293-316 lie on the Cytoplasmic side of the membrane; that stretch reads RNKEVMRALRRVLGKYMLPAHSTL.

Belongs to the G-protein coupled receptor 1 family.

The protein resides in the cell membrane. In terms of biological role, odorant receptor. This chain is Olfactory receptor 2AG1 (OR2AG1), found in Homo sapiens (Human).